A 39-amino-acid chain; its full sequence is Photosystem II reaction center protein J (39 aa).

The helical transmembrane segment at 9–29 threads the bilayer; that stretch reads LWLVGLVGGLAVITMLGLFIY.

It belongs to the PsbJ family. As to quaternary structure, PSII is composed of 1 copy each of membrane proteins PsbA, PsbB, PsbC, PsbD, PsbE, PsbF, PsbH, PsbI, PsbJ, PsbK, PsbL, PsbM, PsbT, PsbX, PsbY, PsbZ, Psb30/Ycf12, at least 3 peripheral proteins of the oxygen-evolving complex and a large number of cofactors. It forms dimeric complexes.

It localises to the plastid. It is found in the chloroplast thylakoid membrane. Functionally, one of the components of the core complex of photosystem II (PSII). PSII is a light-driven water:plastoquinone oxidoreductase that uses light energy to abstract electrons from H(2)O, generating O(2) and a proton gradient subsequently used for ATP formation. It consists of a core antenna complex that captures photons, and an electron transfer chain that converts photonic excitation into a charge separation. The sequence is that of Photosystem II reaction center protein J from Phaeodactylum tricornutum (strain CCAP 1055/1).